The chain runs to 891 residues: Nitrate reductase [NAD(P)H] (891 aa).

The disordered stretch occupies residues 1 to 78 (MAASVEYNRQ…VKDPRDEATS (78 aa)). Basic and acidic residues predominate over residues 63 to 76 (LDVEPSVKDPRDEA). A Mo-molybdopterin-binding site is contributed by cysteine 168. Residues 515 to 590 (SAQFTMSEVR…LEMYRVGELI (76 aa)) enclose the Cytochrome b5 heme-binding domain. Histidine 550 and histidine 573 together coordinate heme. The FAD-binding FR-type domain occupies 630 to 742 (REKVRCRLVD…KGPVGHIEYA (113 aa)). FAD contacts are provided by residues 682–685 (RAYT), 699–703 (LIKIY), phenylalanine 704, phenylalanine 711, 716–718 (LMS), and threonine 769.

It belongs to the nitrate reductase family. As to quaternary structure, homodimer. Requires FAD as cofactor. It depends on heme as a cofactor. Mo-molybdopterin is required as a cofactor.

The catalysed reaction is nitrite + NAD(+) + H2O = nitrate + NADH + H(+). It carries out the reaction nitrite + NADP(+) + H2O = nitrate + NADPH + H(+). Nitrate reductase is a key enzyme involved in the first step of nitrate assimilation in plants, fungi and bacteria. This is Nitrate reductase [NAD(P)H] (NAR-7) from Hordeum vulgare (Barley).